The primary structure comprises 157 residues: SsrA-binding protein (157 aa).

Residues 132-157 (VHDKRQAQKDKDWAREKDRLFKKAYK) form a disordered region. Basic and acidic residues predominate over residues 135 to 157 (KRQAQKDKDWAREKDRLFKKAYK).

Belongs to the SmpB family.

The protein resides in the cytoplasm. Required for rescue of stalled ribosomes mediated by trans-translation. Binds to transfer-messenger RNA (tmRNA), required for stable association of tmRNA with ribosomes. tmRNA and SmpB together mimic tRNA shape, replacing the anticodon stem-loop with SmpB. tmRNA is encoded by the ssrA gene; the 2 termini fold to resemble tRNA(Ala) and it encodes a 'tag peptide', a short internal open reading frame. During trans-translation Ala-aminoacylated tmRNA acts like a tRNA, entering the A-site of stalled ribosomes, displacing the stalled mRNA. The ribosome then switches to translate the ORF on the tmRNA; the nascent peptide is terminated with the 'tag peptide' encoded by the tmRNA and targeted for degradation. The ribosome is freed to recommence translation, which seems to be the essential function of trans-translation. In Francisella tularensis subsp. novicida (strain U112), this protein is SsrA-binding protein.